We begin with the raw amino-acid sequence, 332 residues long: L-lactate dehydrogenase A chain (332 aa).

Ala-2 is subject to N-acetylalanine. Lys-5 carries the post-translational modification N6-acetyllysine; alternate. The residue at position 5 (Lys-5) is an N6-succinyllysine; alternate. A Phosphotyrosine modification is found at Tyr-10. Lys-14 carries the N6-acetyllysine modification. The residue at position 18 (Thr-18) is a Phosphothreonine. NAD(+) is bound at residue 29-57 (GAVGMACAISILMKDLADELALVDVIEDK). Lys-57 carries the post-translational modification N6-acetyllysine; alternate. Lys-57 participates in a covalent cross-link: Glycyl lysine isopeptide (Lys-Gly) (interchain with G-Cter in SUMO2); alternate. Position 81 is an N6-acetyllysine (Lys-81). Position 99 (Arg-99) interacts with NAD(+). Arg-106 serves as a coordination point for substrate. Lys-118 is subject to N6-acetyllysine; alternate. Lys-118 is modified (N6-succinyllysine; alternate). Lys-126 is modified (N6-acetyllysine). Asn-138 is a binding site for NAD(+). Substrate contacts are provided by Asn-138 and Arg-169. The active-site Proton acceptor is the His-193. N6-acetyllysine occurs at positions 224 and 232. Tyr-239 carries the post-translational modification Phosphotyrosine. The residue at position 243 (Lys-243) is an N6-acetyllysine. A substrate-binding site is contributed by Thr-248. A Phosphothreonine modification is found at Thr-309. Ser-310 is subject to Phosphoserine. Lys-318 is subject to N6-acetyllysine; alternate. Lys-318 carries the post-translational modification N6-succinyllysine; alternate. Thr-322 carries the phosphothreonine modification.

The protein belongs to the LDH/MDH superfamily. LDH family. In terms of assembly, homotetramer. Interacts with PTEN upstream reading frame protein MP31. Interacts with folliculin FLCN; the interaction is direct and inhibits enzymatic activity. ISGylated. In terms of tissue distribution, predominantly expressed in anaerobic tissues such as skeletal muscle and liver.

The protein localises to the cytoplasm. The catalysed reaction is (S)-lactate + NAD(+) = pyruvate + NADH + H(+). It functions in the pathway fermentation; pyruvate fermentation to lactate; (S)-lactate from pyruvate: step 1/1. With respect to regulation, fermentation of pyruvate to lactate is inhibited when bound to folliculin FLCN, perhaps partly by FLCN preventing binding of cofactor NADH. Its function is as follows. Interconverts simultaneously and stereospecifically pyruvate and lactate with concomitant interconversion of NADH and NAD(+). The polypeptide is L-lactate dehydrogenase A chain (Homo sapiens (Human)).